Reading from the N-terminus, the 673-residue chain is DNA ligase (673 aa).

NAD(+) is bound by residues 34–38 (DAEYD), 83–84 (SL), and E116. Residue K118 is the N6-AMP-lysine intermediate of the active site. Residues R139, E176, K293, and K317 each contribute to the NAD(+) site. Zn(2+)-binding residues include C411, C414, C429, and C435. The 79-residue stretch at 595-673 (NQQNPFFGKT…EDEFLKWVNS (79 aa)) folds into the BRCT domain.

The protein belongs to the NAD-dependent DNA ligase family. LigA subfamily. It depends on Mg(2+) as a cofactor. Mn(2+) serves as cofactor.

The catalysed reaction is NAD(+) + (deoxyribonucleotide)n-3'-hydroxyl + 5'-phospho-(deoxyribonucleotide)m = (deoxyribonucleotide)n+m + AMP + beta-nicotinamide D-nucleotide.. In terms of biological role, DNA ligase that catalyzes the formation of phosphodiester linkages between 5'-phosphoryl and 3'-hydroxyl groups in double-stranded DNA using NAD as a coenzyme and as the energy source for the reaction. It is essential for DNA replication and repair of damaged DNA. This Legionella pneumophila (strain Paris) protein is DNA ligase.